We begin with the raw amino-acid sequence, 124 residues long: Protein MGF 110-5L (124 aa).

Positions 1 to 28 are cleaved as a signal peptide; that stretch reads MLVIILGVIGLLANQVLGLPTQAGGHLR.

It belongs to the asfivirus MGF 110 family.

Functionally, plays a role in virus cell tropism, and may be required for efficient virus replication in macrophages. This chain is Protein MGF 110-5L, found in Ornithodoros (relapsing fever ticks).